Consider the following 506-residue polypeptide: Galactose/methyl galactoside import ATP-binding protein MglA (506 aa).

ABC transporter domains follow at residues 14-249 (LEMS…VGRS) and 264-506 (VILE…SLHL). 46–53 (GENGAGKS) contacts ATP.

It belongs to the ABC transporter superfamily. Galactose/methyl galactoside importer (TC 3.A.1.2.3) family. In terms of assembly, the complex is composed of one ATP-binding protein (MglA), two transmembrane proteins (MglC) and a solute-binding protein (MglB).

It is found in the cell inner membrane. It catalyses the reaction D-galactose(out) + ATP + H2O = D-galactose(in) + ADP + phosphate + H(+). The catalysed reaction is methyl beta-D-galactoside(out) + ATP + H2O = methyl beta-D-galactoside(in) + ADP + phosphate + H(+). Its function is as follows. Part of the ABC transporter complex MglABC involved in galactose/methyl galactoside import. Responsible for energy coupling to the transport system. In Shigella flexneri serotype 5b (strain 8401), this protein is Galactose/methyl galactoside import ATP-binding protein MglA.